Here is a 118-residue protein sequence, read N- to C-terminus: Ribonuclease P protein component (118 aa).

This sequence belongs to the RnpA family. As to quaternary structure, consists of a catalytic RNA component (M1 or rnpB) and a protein subunit.

The catalysed reaction is Endonucleolytic cleavage of RNA, removing 5'-extranucleotides from tRNA precursor.. Functionally, RNaseP catalyzes the removal of the 5'-leader sequence from pre-tRNA to produce the mature 5'-terminus. It can also cleave other RNA substrates such as 4.5S RNA. The protein component plays an auxiliary but essential role in vivo by binding to the 5'-leader sequence and broadening the substrate specificity of the ribozyme. The polypeptide is Ribonuclease P protein component (Rickettsia akari (strain Hartford)).